The following is a 418-amino-acid chain: 3-phosphoshikimate 1-carboxyvinyltransferase (418 aa).

Lysine 26, serine 27, and arginine 31 together coordinate 3-phosphoshikimate. Lysine 26 contributes to the phosphoenolpyruvate binding site. Residues glycine 97 and arginine 125 each contribute to the phosphoenolpyruvate site. 3-phosphoshikimate contacts are provided by serine 170, serine 171, glutamine 172, aspartate 297, asparagine 320, and lysine 324. Glutamine 172 provides a ligand contact to phosphoenolpyruvate. Aspartate 297 (proton acceptor) is an active-site residue. Phosphoenolpyruvate is bound by residues arginine 328, arginine 375, and lysine 400.

Belongs to the EPSP synthase family. In terms of assembly, monomer.

It is found in the cytoplasm. The enzyme catalyses 3-phosphoshikimate + phosphoenolpyruvate = 5-O-(1-carboxyvinyl)-3-phosphoshikimate + phosphate. The protein operates within metabolic intermediate biosynthesis; chorismate biosynthesis; chorismate from D-erythrose 4-phosphate and phosphoenolpyruvate: step 6/7. Its function is as follows. Catalyzes the transfer of the enolpyruvyl moiety of phosphoenolpyruvate (PEP) to the 5-hydroxyl of shikimate-3-phosphate (S3P) to produce enolpyruvyl shikimate-3-phosphate and inorganic phosphate. This Pseudomonas syringae pv. tomato (strain ATCC BAA-871 / DC3000) protein is 3-phosphoshikimate 1-carboxyvinyltransferase.